Reading from the N-terminus, the 119-residue chain is Large ribosomal subunit protein bL12 (119 aa).

Belongs to the bacterial ribosomal protein bL12 family. As to quaternary structure, homodimer. Part of the ribosomal stalk of the 50S ribosomal subunit. Forms a multimeric L10(L12)X complex, where L10 forms an elongated spine to which 2 to 4 L12 dimers bind in a sequential fashion. Binds GTP-bound translation factors.

Its function is as follows. Forms part of the ribosomal stalk which helps the ribosome interact with GTP-bound translation factors. Is thus essential for accurate translation. This is Large ribosomal subunit protein bL12 from Lysinibacillus sphaericus (strain C3-41).